We begin with the raw amino-acid sequence, 270 residues long: tRNA pseudouridine synthase A (270 aa).

The active-site Nucleophile is the Asp-52. Tyr-110 contacts substrate.

This sequence belongs to the tRNA pseudouridine synthase TruA family. In terms of assembly, homodimer.

The enzyme catalyses uridine(38/39/40) in tRNA = pseudouridine(38/39/40) in tRNA. In terms of biological role, formation of pseudouridine at positions 38, 39 and 40 in the anticodon stem and loop of transfer RNAs. In Paraburkholderia xenovorans (strain LB400), this protein is tRNA pseudouridine synthase A.